The sequence spans 153 residues: Actin-related protein 2/3 complex subunit 5-like protein (153 aa).

Residue Ser-64 is modified to Phosphoserine.

It belongs to the ARPC5 family. May be a component of the Arp2/3 complex in which it may replace ARPC5.

The protein localises to the cytoplasm. It is found in the cytoskeleton. Its subcellular location is the cell projection. Functionally, may function as component of the Arp2/3 complex which is involved in regulation of actin polymerization and together with an activating nucleation-promoting factor (NPF) mediates the formation of branched actin networks. The polypeptide is Actin-related protein 2/3 complex subunit 5-like protein (ARPC5L) (Bos taurus (Bovine)).